A 247-amino-acid polypeptide reads, in one-letter code: Opacity protein opA52 (247 aa).

Alanine 1 is a signal peptide.

This sequence belongs to the opacity porin family.

Its subcellular location is the cell outer membrane. Functionally, implicated in a number of adherence functions. OPA proteins are implicated in pathogenesis and are subject to phase variation. The protein is Opacity protein opA52 (opaG) of Neisseria gonorrhoeae.